The chain runs to 1280 residues: Rho guanine nucleotide exchange factor 10-like protein (1280 aa).

Positions 1–10 (MASSNPPPQP) are enriched in pro residues. The segment at 1–94 (MASSNPPPQP…TEAPTVVSNG (94 aa)) is disordered. Over residues 26-46 (EVEEDSGEAFEFDDSDEEEDT) the composition is skewed to acidic residues. Serine 40 is modified (phosphoserine). Low complexity predominate over residues 78-89 (PAAAPPQTEAPT). Tyrosine 131 and tyrosine 152 each carry phosphotyrosine. A disordered region spans residues 161 to 202 (PRETEDLGWSSSEFESYSEDSGEETKPEAEPTKHRGSFQPKL). Basic and acidic residues predominate over residues 183–193 (EETKPEAEPTK). The residue at position 279 (serine 279) is a Phosphoserine. Residues 314-501 (VRRHILGSIV…ETLAEKLNEQ (188 aa)) form the DH domain. Disordered regions lie at residues 1133–1163 (QEEAEGPQAEEDKPDGQAHETVPGPDSHTAR) and 1186–1207 (PLLSVREPAPADGSALEHSEED).

In terms of assembly, interacts with RHOA, RHOB and RHOC.

It localises to the cytoplasm. In terms of biological role, acts as a guanine nucleotide exchange factor (GEF) for RHOA, RHOB and RHOC. This is Rho guanine nucleotide exchange factor 10-like protein (Arhgef10l) from Mus musculus (Mouse).